The following is a 346-amino-acid chain: Protein-glutamate methylesterase/protein-glutamine glutaminase (346 aa).

The Response regulatory domain occupies 6–123; the sequence is KVLVVDDSAF…SLDLEKVRDL (118 aa). Asp57 carries the post-translational modification 4-aspartylphosphate. One can recognise a CheB-type methylesterase domain in the interval 155–346; that stretch reads PFDKTIIVIG…ADSIVRQCKR (192 aa). Active-site residues include Ser166, His193, and Asp289.

Belongs to the CheB family. In terms of processing, phosphorylated by CheA. Phosphorylation of the N-terminal regulatory domain activates the methylesterase activity.

The protein resides in the cytoplasm. The enzyme catalyses [protein]-L-glutamate 5-O-methyl ester + H2O = L-glutamyl-[protein] + methanol + H(+). The catalysed reaction is L-glutaminyl-[protein] + H2O = L-glutamyl-[protein] + NH4(+). In terms of biological role, involved in chemotaxis. Part of a chemotaxis signal transduction system that modulates chemotaxis in response to various stimuli. Catalyzes the demethylation of specific methylglutamate residues introduced into the chemoreceptors (methyl-accepting chemotaxis proteins or MCP) by CheR. Also mediates the irreversible deamidation of specific glutamine residues to glutamic acid. This is Protein-glutamate methylesterase/protein-glutamine glutaminase from Halalkalibacterium halodurans (strain ATCC BAA-125 / DSM 18197 / FERM 7344 / JCM 9153 / C-125) (Bacillus halodurans).